Here is a 94-residue protein sequence, read N- to C-terminus: Putative septation protein SpoVG (94 aa).

It belongs to the SpoVG family.

In terms of biological role, could be involved in septation. This chain is Putative septation protein SpoVG, found in Acholeplasma laidlawii (strain PG-8A).